The primary structure comprises 316 residues: Probable 5-dehydro-4-deoxyglucarate dehydratase 1 (316 aa).

The protein belongs to the DapA family.

The enzyme catalyses 5-dehydro-4-deoxy-D-glucarate + H(+) = 2,5-dioxopentanoate + CO2 + H2O. It functions in the pathway carbohydrate acid metabolism; D-glucarate degradation; 2,5-dioxopentanoate from D-glucarate: step 2/2. The sequence is that of Probable 5-dehydro-4-deoxyglucarate dehydratase 1 from Streptomyces coelicolor (strain ATCC BAA-471 / A3(2) / M145).